The primary structure comprises 404 residues: Plasma serine protease inhibitor (404 aa).

The signal sequence occupies residues 1 to 19 (MRLCLFLCLVLLGPRMATL). Positions 20–24 (RRSQK) are cleaved as a propeptide — removed in mature form. Threonine 35 and threonine 36 each carry an O-linked (GalNAc...) threonine glycan. Residues asparagine 245, asparagine 258, and asparagine 334 are each glycosylated (N-linked (GlcNAc...) asparagine).

Belongs to the serpin family. Forms protease inhibiting heterodimers in extracellular body fluids with serine proteases such as activated protein C/coagulation factor V/F5, acrosin/ACR, chymotrypsinogen B/CTRB1, prothrombin/F2, factor Xa/F10, factor XI/F11, kallikrein/KLKB1, tissue kallikrein, trypsin/PRSS1, prostate specific antigen/KLK3, tissue plasminogen activator/PLAT and urinary plasminogen activator/PLAU. Forms membrane-anchored serine proteases inhibiting heterodimers with TMPRSS7 and TMPRSS11E. Interacts with SEMG2. N-glycosylated; glycans consist of a mixture of sialylated bi- (including sialyl-Lewis X epitopes), tri- and tetra-antennary complex-type chains; affects the maximal heparin- and thrombomodulin-enhanced rates of thrombin inhibition. O-glycosylated; further modified with 2 sialic acid residues. Proteolytically cleaved at the N-terminus; inhibits slightly the heparin- and thrombomodulin-enhanced rates of thrombin inhibition. N- and O-glycosylated. Post-translationally, proteolytically cleaved. Inhibition of proteases is accompanied by formation of a stable enzyme-inhibitor complex and by degradation of the serpin to lower molecular weight derivatives. In terms of tissue distribution, expressed strongly in the liver, and moderately in the kidney and testis, but not in other tissues tested.

It is found in the secreted. It localises to the extracellular space. With respect to regulation, its inhibitory activity is greatly enhanced in the presence of glycosaminoglycans, heparin, thrombomodulin and phospholipids vesicles. In terms of biological role, heparin-dependent serine protease inhibitor acting in body fluids and secretions. Inactivates serine proteases by binding irreversibly to their serine activation site. Involved in the regulation of intravascular and extravascular proteolytic activities. Plays hemostatic roles in the blood plasma. Acts as a procoagulant and pro-inflammatory factor by inhibiting the anticoagulant activated protein C factor as well as the generation of activated protein C factor by the thrombin/thrombomodulin complex. Acts as an anticoagulant factor by inhibiting blood coagulation factors like prothrombin, factor XI, factor Xa, plasma kallikrein and fibrinolytic enzymes such as tissue- and urinary-type plasminogen activators. In seminal plasma, inactivates several serine proteases implicated in the reproductive system. Inhibits the serpin acrosin; indirectly protects component of the male genital tract from being degraded by excessive released acrosin. Inhibits tissue- and urinary-type plasminogen activator, prostate-specific antigen and kallikrein activities; has a control on the sperm motility and fertilization. Inhibits the activated protein C-catalyzed degradation of SEMG1 and SEMG2; regulates the degradation of semenogelin during the process of transfer of spermatozoa from the male reproductive tract into the female tract. In urine, inhibits urinary-type plasminogen activator and kallikrein activities. Inactivates membrane-anchored serine proteases activities such as MPRSS7 and TMPRSS11E. Inhibits urinary-type plasminogen activator-dependent tumor cell invasion and metastasis. May also play a non-inhibitory role in seminal plasma and urine as a hydrophobic hormone carrier by its binding to retinoic acid. This chain is Plasma serine protease inhibitor (SERPINA5), found in Bos taurus (Bovine).